The primary structure comprises 170 residues: Small ribosomal subunit protein mS41 (170 aa).

A mitochondrion-targeting transit peptide spans 1-20 (MFRTLLSSTVRSIQLKPVTS).

The protein belongs to the mitochondrion-specific ribosomal protein mS41 family. In terms of assembly, component of the mitochondrial small ribosomal subunit (mt-SSU).

The protein resides in the mitochondrion. Component of the mitochondrial ribosome (mitoribosome), a dedicated translation machinery responsible for the synthesis of mitochondrial genome-encoded proteins, including at least some of the essential transmembrane subunits of the mitochondrial respiratory chain. The mitoribosomes are attached to the mitochondrial inner membrane and translation products are cotranslationally integrated into the membrane. mS41 is involved in telomere length regulation. The polypeptide is Small ribosomal subunit protein mS41 (FYV4) (Candida albicans (strain SC5314 / ATCC MYA-2876) (Yeast)).